Consider the following 252-residue polypeptide: Body wall muscle protein HR-29 (252 aa).

N-acetylserine is present on Ser2. A run of 3 repeats spans residues 37–55, 56–74, and 75–93. Positions 37–93 are 3 X 19 AA approximate tandem repeats; sequence RDWMTTPYSSTGIGRRDLSQDWMTTPYTPAGVGRRDLSQDWMTTPYTSKGIGSRNLS. In terms of domain architecture, sHSP spans 138 to 249; that stretch reads ISVEHEGKTT…KKTAVPVTVE (112 aa).

The protein belongs to the small heat shock protein (HSP20) family. As to quaternary structure, exists as an oligomer.

The protein resides in the membrane. May be a component of myofibrils where it acts as a stabilizer. The chain is Body wall muscle protein HR-29 from Halocynthia roretzi (Sea squirt).